We begin with the raw amino-acid sequence, 309 residues long: MRALITGVAGFVGKYLANHLTEQNVEVFGTSRNNEAKLPNVEMISLDIMDSQRVKKVISDIKPDYIFHLAAKSSVKDSWLNKKGTFSTNVFGTLHVLDAVRDSNLDCRILTIGSSEEYGMILPEESPVSEENQLRPMSPYGVSKASVGMLARQYVKAYGMDIIHTRTFNHIGPGQSLGFVTQDFAKQIVDIEMEKQEPIIKVGNLEAVRDFTDVRDIVQAYWLLSQYGKTGDVYNVCSGIGTRIQDVLDLLLAMANVKIDTELNPLQLRPSEVPTLIGSNKRLKDSTGWKPRIPLEKSLFEILQSYRQA.

NADP(+) is bound by residues 11-12 (FV), R32, 47-48 (DI), and 71-73 (AKS). Position 114–115 (114–115 (SS)) interacts with substrate. Residue Y140 participates in NADP(+) binding. Residues N169, D183, R209, and 269–272 (RPSE) contribute to the substrate site.

This sequence belongs to the NAD(P)-dependent epimerase/dehydratase family. GDP-6-deoxy-D-mannose reductase subfamily.

It carries out the reaction GDP-alpha-D-rhamnose + NAD(+) = GDP-4-dehydro-alpha-D-rhamnose + NADH + H(+). It catalyses the reaction GDP-alpha-D-rhamnose + NADP(+) = GDP-4-dehydro-alpha-D-rhamnose + NADPH + H(+). Its function is as follows. Reductase that catalyzes the conversion of GDP-6-deoxy-D-mannose to GDP-4-dehydro-6-deoxy-D-mannose (GDP-D-rhamnose). The polypeptide is GDP-6-deoxy-D-mannose reductase (rmd) (Aneurinibacillus thermoaerophilus).